Consider the following 375-residue polypeptide: POU domain, class 3, transcription factor 1 (375 aa).

Disordered stretches follow at residues 1–29 (MAAT…RMHQ), 56–139 (MSLT…QPLI), and 151–200 (MLGP…PSSD). 3 stretches are compositionally biased toward polar residues: residues 107-117 (VHQQTPSSHAW), 130-139 (PGSNSHQPLI), and 151-160 (MLGPQASSLH). The span at 162 to 171 (SMRDPLHDDP) shows a compositional bias: basic and acidic residues. Residues 194 to 268 (EDAPSSDDLE…LLNKWLEETD (75 aa)) enclose the POU-specific domain. The homeobox DNA-binding region spans 286 to 345 (KRKKRTSIEVGVKGALENHFLKCPKPSAHEITSLADSLQLEKEVVRVWFCNRRQKEKRMT).

Belongs to the POU transcription factor family. Class-3 subfamily.

The protein resides in the nucleus. Its function is as follows. Acts as a transcription factor. May play a role in neuronal differentiation. In Xenopus tropicalis (Western clawed frog), this protein is POU domain, class 3, transcription factor 1.